A 333-amino-acid chain; its full sequence is Protein farnesyltransferase/geranylgeranyltransferase type-1 subunit alpha (333 aa).

5 PFTA repeats span residues 61–95 (LSSR…SLKV), 96–130 (DLHV…KLGP), 132–166 (ARNS…NLGG), 167–200 (WEDE…RSPV), and 207–241 (MRES…DEST).

It belongs to the protein prenyltransferase subunit alpha family. As to quaternary structure, heterodimer of FTA and FTB (farnesyltransferase). Heterodimer of an alpha and a beta subunit. Mg(2+) is required as a cofactor.

It carries out the reaction L-cysteinyl-[protein] + (2E,6E)-farnesyl diphosphate = S-(2E,6E)-farnesyl-L-cysteinyl-[protein] + diphosphate. The catalysed reaction is geranylgeranyl diphosphate + L-cysteinyl-[protein] = S-geranylgeranyl-L-cysteinyl-[protein] + diphosphate. Its function is as follows. Essential subunit of both the farnesyltransferase and the geranylgeranyltransferase complex. Contributes to the transfer of a farnesyl or geranylgeranyl moiety from farnesyl or geranylgeranyl diphosphate to a cysteine at the fourth position from the C-terminus of several proteins having the C-terminal sequence Cys-aliphatic-aliphatic-X. This Pisum sativum (Garden pea) protein is Protein farnesyltransferase/geranylgeranyltransferase type-1 subunit alpha (FTA).